Reading from the N-terminus, the 366-residue chain is Tetraacyldisaccharide 4'-kinase (366 aa).

Residue 65 to 72 (TVGGTGKT) coordinates ATP. Residues 343 to 366 (AKSTPASGGATGLNKEHQDGQPAA) are disordered. The span at 356 to 366 (NKEHQDGQPAA) shows a compositional bias: basic and acidic residues.

The protein belongs to the LpxK family.

The catalysed reaction is a lipid A disaccharide + ATP = a lipid IVA + ADP + H(+). It functions in the pathway glycolipid biosynthesis; lipid IV(A) biosynthesis; lipid IV(A) from (3R)-3-hydroxytetradecanoyl-[acyl-carrier-protein] and UDP-N-acetyl-alpha-D-glucosamine: step 6/6. Its function is as follows. Transfers the gamma-phosphate of ATP to the 4'-position of a tetraacyldisaccharide 1-phosphate intermediate (termed DS-1-P) to form tetraacyldisaccharide 1,4'-bis-phosphate (lipid IVA). The sequence is that of Tetraacyldisaccharide 4'-kinase from Cupriavidus pinatubonensis (strain JMP 134 / LMG 1197) (Cupriavidus necator (strain JMP 134)).